Consider the following 378-residue polypeptide: Spermidine/putrescine import ATP-binding protein PotA (378 aa).

Residues 18–248 (VQLAGIRKCF…PKNLFVAGFI (231 aa)) form the ABC transporter domain. Position 50-57 (50-57 (GPSGCGKT)) interacts with ATP.

The protein belongs to the ABC transporter superfamily. Spermidine/putrescine importer (TC 3.A.1.11.1) family. In terms of assembly, the complex is composed of two ATP-binding proteins (PotA), two transmembrane proteins (PotB and PotC) and a solute-binding protein (PotD).

The protein resides in the cell inner membrane. It carries out the reaction ATP + H2O + polyamine-[polyamine-binding protein]Side 1 = ADP + phosphate + polyamineSide 2 + [polyamine-binding protein]Side 1.. In terms of biological role, part of the ABC transporter complex PotABCD involved in spermidine/putrescine import. Responsible for energy coupling to the transport system. In Shigella boydii serotype 4 (strain Sb227), this protein is Spermidine/putrescine import ATP-binding protein PotA.